Here is a 238-residue protein sequence, read N- to C-terminus: MTPDEFLSALTDFDIKLSDKQIEQFERYFELLVEWNEKINLTAITEKNEVYLKHFYDSVAPILYGLITDQPVSILDIGAGAGFPSLPMKIIFPELEVTIIDSLNKRINFLSLLTEELGLENVTLLHGRAEDFGQDSNYRATFDFVTARAVARLSVLSEFTIPFLKKNGNLLSLKAAQFEEELTDAKKAIAILGGKFIKEIAYELPNGDERHIAVIEKKKETPKKYPRKAGTPAKSPIK.

Residues glycine 78, phenylalanine 83, 129–130 (AE), and arginine 148 each bind S-adenosyl-L-methionine. The tract at residues 217 to 238 (KKKETPKKYPRKAGTPAKSPIK) is disordered.

The protein belongs to the methyltransferase superfamily. RNA methyltransferase RsmG family.

It is found in the cytoplasm. Functionally, specifically methylates the N7 position of a guanine in 16S rRNA. In Lactococcus lactis subsp. cremoris (strain MG1363), this protein is Ribosomal RNA small subunit methyltransferase G.